Here is a 1058-residue protein sequence, read N- to C-terminus: Non-canonical non-ribosomal peptide synthetase FUB8 (1058 aa).

The segment at Glu43 to Glu365 is adenylation (A) domain. One can recognise a Carrier domain in the interval Thr566–Leu643. Residue Ser601 is modified to O-(pantetheine 4'-phosphoryl)serine. A thioester reductase (TR) domain region spans residues Leu680–Ile921.

The protein operates within mycotoxin biosynthesis. Functionally, non-canonical non-ribosomal peptide synthetase; part of the gene cluster that mediates the biosynthesis of fusaric acid, a mycotoxin with low to moderate toxicity to animals and humans, but with high phytotoxic properties. L-aspartate is suggested as fusaric acid amino acid precursor that is activated and further processed to O-acetyl-L-homoserine by cluster enzymes aspartate kinase FUB3 and homoserine O-acetyltransferase FUB5, as well as enzymes of the primary metabolism. The polyketide synthase (PKS) FUB1 generates the triketide trans-2-hexenal which is presumptively released by the hydrolase FUB4 and linked to the NRPS-bound amino acid precursor by NAD(P)-dependent dehydrogenase FUB6. FUB1, FUB4, and the non-canonical NRPS Fub8 may form an enzyme complex. Further processing of the NRPS-bound intermediate might be carried out by FUB6 and the sulfhydrylase FUB7, enabling a spontaneous electrocyclization to close the carbon backbone of fusaric acid. Dihydrofusaric acid is likely to be released via reduction by the thioester reductase (TR) domain of FUB8 whereupon the final oxidation to fusaric acid may (also) be performed by the FMN-dependent dehydrogenase FUB9. This Gibberella moniliformis (strain M3125 / FGSC 7600) (Maize ear and stalk rot fungus) protein is Non-canonical non-ribosomal peptide synthetase FUB8.